Here is a 492-residue protein sequence, read N- to C-terminus: Catalase isozyme A (492 aa).

A disordered region spans residues 1–23 (MDPCKFRPSSSFDTKTTTTNAGA). Over residues 8 to 21 (PSSSFDTKTTTTNA) the composition is skewed to polar residues. Active-site residues include His-65 and Asn-138. Tyr-348 is a heme binding site.

This sequence belongs to the catalase family. As to quaternary structure, homotetramer. Heme is required as a cofactor.

It is found in the peroxisome. Its subcellular location is the glyoxysome. The catalysed reaction is 2 H2O2 = O2 + 2 H2O. Functionally, occurs in almost all aerobically respiring organisms and serves to protect cells from the toxic effects of hydrogen peroxide. The sequence is that of Catalase isozyme A from Oryza sativa subsp. indica (Rice).